A 967-amino-acid polypeptide reads, in one-letter code: Protein moonraker (967 aa).

Residues 178-201 (SHPGQSDLTVPNSPPTHDPGLQPH) are disordered. Over residues 179-188 (HPGQSDLTVP) the composition is skewed to polar residues. 2 positions are modified to phosphoserine: S287 and S409. Disordered regions lie at residues 401–431 (ALERWPSTSPKGERRPLTAKDTFPQETSRPS) and 490–601 (KAGK…SHLT). The span at 525-543 (QSQPHSKSRVQQTTVSSRL) shows a compositional bias: polar residues. The span at 557–568 (WIPPNPTSPPAS) shows a compositional bias: pro residues. A coiled-coil region spans residues 616–642 (AETSKRLKELEELKAKEIDSMQKQRLD). S700 and S826 each carry phosphoserine. The segment at 849 to 872 (RPCNGNSLDESVGTEEGSEKREAP) is disordered. Positions 885–967 (GRAPLFVPPG…FTSEFLEAAT (83 aa)) are necessary and sufficient for CEP20-binding.

In terms of assembly, interacts with CEP63. Interacts with WDR62. Forms a complex with OFD1 and CEP20/FOR20. Interacts with PCM1.

It localises to the cytoplasm. Its subcellular location is the cytoskeleton. It is found in the microtubule organizing center. The protein localises to the centrosome. The protein resides in the centriole. It localises to the centriolar satellite. Functionally, involved in centriole duplication. Positively regulates CEP63 centrosomal localization. Required for WDR62 centrosomal localization and promotes the centrosomal localization of CDK2. May play a role in cilium assembly. The protein is Protein moonraker (KIAA0753) of Homo sapiens (Human).